A 401-amino-acid chain; its full sequence is Elongation factor Tu 1 (401 aa).

The 200-residue stretch at 10–209 folds into the tr-type G domain; sequence KPHVNVGTIG…AVDEYIPTPV (200 aa). The interval 19–26 is G1; the sequence is GHVDHGKT. 19-26 contacts GTP; it reads GHVDHGKT. Position 26 (Thr-26) interacts with Mg(2+). The segment at 60–64 is G2; it reads GITIA. Residues 81–84 are G3; that stretch reads DCPG. Residues 81 to 85 and 136 to 139 each bind GTP; these read DCPGH and NKVD. Positions 136–139 are G4; sequence NKVD. The G5 stretch occupies residues 174–176; sequence SAL.

Belongs to the TRAFAC class translation factor GTPase superfamily. Classic translation factor GTPase family. EF-Tu/EF-1A subfamily. As to quaternary structure, monomer.

Its subcellular location is the cytoplasm. It carries out the reaction GTP + H2O = GDP + phosphate + H(+). In terms of biological role, GTP hydrolase that promotes the GTP-dependent binding of aminoacyl-tRNA to the A-site of ribosomes during protein biosynthesis. The sequence is that of Elongation factor Tu 1 from Roseiflexus sp. (strain RS-1).